Consider the following 178-residue polypeptide: Gamma-crystallin S (178 aa).

Residue Ser-2 is modified to N-acetylserine. An N-terminal arm region spans residues 2 to 5 (SKSV). 2 Beta/gamma crystallin 'Greek key' domains span residues 6–44 (AKITFYDDKNFQGHHYECDSDCPDFHTYLSCCNSIRVTG) and 45–87 (GAWV…KVIH). Residues 88 to 93 (LSSGGQ) form a connecting peptide region. 2 Beta/gamma crystallin 'Greek key' domains span residues 94 to 134 (YKLQ…KVLD) and 135 to 177 (GVWV…RRIM).

It belongs to the beta/gamma-crystallin family. As to quaternary structure, monomer.

Crystallins are the dominant structural components of the vertebrate eye lens. This is Gamma-crystallin S (CRYGS) from Macropus fuliginosus (Western gray kangaroo).